The primary structure comprises 389 residues: Nucleic acid dioxygenase ALKBH1 (389 aa).

The interval 1–127 (MGKMAAAVAS…CLKLYSQKPN (127 aa)) is interaction with DNAJB6. A tRNA-binding region spans residues 86 to 389 (SKWRAYGLEG…VKRKRLNPNS (304 aa)). Residues Trp144 and 175 to 177 (YHY) each bind substrate. The Fe2OG dioxygenase domain maps to 213–347 (QAEAGILNYY…RVNMTVRQVL (135 aa)). 220 to 222 (NYY) contributes to the 2-oxoglutarate binding site. Fe cation is bound by residues His231, Asp233, and His287. Asp233 contributes to the substrate binding site. Position 338–344 (338–344 (RVNMTVR)) interacts with 2-oxoglutarate.

Monomer. Interacts with DNAJB6. It depends on Fe(2+) as a cofactor. As to expression, in adult organs, highly expressed in testis, eye, brain and kidney.

It localises to the nucleus. It catalyses the reaction an N(6)-methyl-2'-deoxyadenosine in DNA + 2-oxoglutarate + O2 = a 2'-deoxyadenosine in DNA + formaldehyde + succinate + CO2. It carries out the reaction 2'-deoxyribonucleotide-(2'-deoxyribose 5'-phosphate)-2'-deoxyribonucleotide-DNA = a 3'-end 2'-deoxyribonucleotide-(2,3-dehydro-2,3-deoxyribose 5'-phosphate)-DNA + a 5'-end 5'-phospho-2'-deoxyribonucleoside-DNA + H(+). The enzyme catalyses a methylated nucleobase within DNA + 2-oxoglutarate + O2 = a nucleobase within DNA + formaldehyde + succinate + CO2. The catalysed reaction is an N(1)-methyladenosine in tRNA + 2-oxoglutarate + O2 = an adenosine in tRNA + formaldehyde + succinate + CO2. It catalyses the reaction 5-methylcytidine(34) in mitochondrial tRNA(Met) + 2 2-oxoglutarate + 2 O2 = 5-formylcytidine(34) in mitochondrial tRNA(Met) + 2 succinate + 2 CO2 + H2O. It carries out the reaction an N(3)-methylcytidine in mRNA + 2-oxoglutarate + O2 = a cytidine in mRNA + formaldehyde + succinate + CO2. The enzyme catalyses N(1)-methyladenosine(58) in tRNA + 2-oxoglutarate + O2 = adenosine(58) in tRNA + formaldehyde + succinate + CO2. Its function is as follows. Dioxygenase that acts on nucleic acids, such as DNA and tRNA. Requires molecular oxygen, alpha-ketoglutarate and iron. A number of activities have been described for this dioxygenase, but recent results suggest that it mainly acts on tRNAs and mediates their demethylation or oxidation depending on the context and subcellular compartment. Mainly acts as a tRNA demethylase by removing N(1)-methyladenine from various tRNAs, with a preference for N(1)-methyladenine at position 58 (m1A58) present on a stem loop structure of tRNAs. Acts as a regulator of translation initiation and elongation in response to glucose deprivation: regulates both translation initiation, by mediating demethylation of tRNA(Met), and translation elongation, N(1)-methyladenine-containing tRNAs being preferentially recruited to polysomes to promote translation elongation. In mitochondrion, specifically interacts with mt-tRNA(Met) and mediates oxidation of mt-tRNA(Met) methylated at cytosine(34) to form 5-formylcytosine (f(5)c) at this position. mt-tRNA(Met) containing the f(5)c modification at the wobble position enables recognition of the AUA codon in addition to the AUG codon, expanding codon recognition in mitochondrial translation. Specifically demethylates DNA methylated on the 6th position of adenine (N(6)-methyladenosine) DNA. N(6)-methyladenosine (m6A) DNA is present at some L1 elements in embryonic stem cells and probably promotes their silencing. Demethylates mRNAs containing N(3)-methylcytidine modification. Also able to repair alkylated single-stranded DNA by oxidative demethylation, but with low activity. Also has DNA lyase activity and introduces double-stranded breaks at abasic sites: cleaves both single-stranded DNA and double-stranded DNA at abasic sites, with the greatest activity towards double-stranded DNA with two abasic sites. DNA lyase activity does not require alpha-ketoglutarate and iron and leads to the formation of an irreversible covalent protein-DNA adduct with the 5' DNA product. DNA lyase activity is not required during base excision repair and class switch recombination of the immunoglobulin heavy chain during B lymphocyte activation. May play a role in placental trophoblast lineage differentiation. The sequence is that of Nucleic acid dioxygenase ALKBH1 from Mus musculus (Mouse).